The primary structure comprises 529 residues: Putative E3 ubiquitin-protein ligase ARI4 (529 aa).

Residues 1-22 (MDDEYMSLEEEEDNCYPSEFDD) show a composition bias toward acidic residues. A disordered region spans residues 1–23 (MDDEYMSLEEEEDNCYPSEFDDH). The TRIAD supradomain stretch occupies residues 115–327 (KTMKCDICME…IAGHSCGRYK (213 aa)). Residues C119, C122, C137, H139, C142, C145, C164, C169, C206, C212, C230, C232, C237, C240, H245, C250, C277, and C280 each contribute to the Zn(2+) site. The segment at 119-169 (CDICMEEDLSKYAMTRMECGHRFCNDCWKEHFTVRINEGEGKRIRCMAYKC) adopts an RING-type 1 zinc-finger fold. The IBR-type zinc-finger motif lies at 186 to 250 (EKFDRFLIES…LSESHSPCSC (65 aa)). The segment at 277–305 (CPKCSKPIQKRDGCNHMTCKCGQHFCWLC) adopts an RING-type 2; atypical zinc-finger fold. The active site involves C290. C295, C297, C302, C305, H313, and C323 together coordinate Zn(2+).

This sequence belongs to the RBR family. Ariadne subfamily. Requires Zn(2+) as cofactor.

The catalysed reaction is [E2 ubiquitin-conjugating enzyme]-S-ubiquitinyl-L-cysteine + [acceptor protein]-L-lysine = [E2 ubiquitin-conjugating enzyme]-L-cysteine + [acceptor protein]-N(6)-ubiquitinyl-L-lysine.. It functions in the pathway protein modification; protein ubiquitination. Might act as an E3 ubiquitin-protein ligase, or as part of E3 complex, which accepts ubiquitin from specific E2 ubiquitin-conjugating enzymes and then transfers it to substrates. This Arabidopsis thaliana (Mouse-ear cress) protein is Putative E3 ubiquitin-protein ligase ARI4 (ARI4).